The chain runs to 170 residues: RNA pyrophosphohydrolase (170 aa).

A Nudix hydrolase domain is found at 8-151; it reads PYRPNVGIAL…KKALYAELIP (144 aa). A Nudix box motif is present at residues 42 to 63; that stretch reads GGIDEGETPQVAALREMGEEIG.

It belongs to the Nudix hydrolase family. RppH subfamily. It depends on a divalent metal cation as a cofactor.

Accelerates the degradation of transcripts by removing pyrophosphate from the 5'-end of triphosphorylated RNA, leading to a more labile monophosphorylated state that can stimulate subsequent ribonuclease cleavage. In Gluconobacter oxydans (strain 621H) (Gluconobacter suboxydans), this protein is RNA pyrophosphohydrolase.